We begin with the raw amino-acid sequence, 116 residues long: Large ribosomal subunit protein bL19 (116 aa).

The protein belongs to the bacterial ribosomal protein bL19 family.

In terms of biological role, this protein is located at the 30S-50S ribosomal subunit interface and may play a role in the structure and function of the aminoacyl-tRNA binding site. This chain is Large ribosomal subunit protein bL19, found in Syntrophomonas wolfei subsp. wolfei (strain DSM 2245B / Goettingen).